The chain runs to 521 residues: Runt-related transcription factor 2 (521 aa).

2 disordered regions span residues 18 to 59 (FWDP…QQQQ) and 222 to 340 (DGPR…RRIS). Composition is skewed to low complexity over residues 21–33 (PSTSRRFSPPSSS) and 47–59 (AAQQQQQQQQQQQ). Positions 101 to 229 (TMVEIIADHP…TVDGPREPRR (129 aa)) constitute a Runt domain. Residue Lys-238 forms a Glycyl lysine isopeptide (Lys-Gly) (interchain with G-Cter in SUMO2) linkage. Residues 242-258 (FSDRLSDLGRIPHPSMR) form a required for interaction with FOXO1 region. At Arg-267 the chain carries Asymmetric dimethylarginine. Over residues 267 to 326 (RPSLNSAPSPFNPQGQSQITDPRQAQSSPPWSYDQSYPSYLSQMTSPSIHSTTPLSSTRG) the composition is skewed to polar residues. Residues 336 to 439 (PRRISDDDTA…SQSQSGPFQT (104 aa)) are interaction with KAT6A. A Phosphoserine modification is found at Ser-340. The interval 374–468 (RQFPSISSLT…VPGGDRSPSR (95 aa)) is interaction with KAT6B. Ser-451 carries the post-translational modification Phosphoserine; by CDK1. The interval 460 to 521 (PGGDRSPSRM…RMDESVWRPY (62 aa)) is disordered. Polar residues-rich tracts occupy residues 473 to 492 (CTTTSNGSTLLNPNLPNQND) and 499 to 511 (SHSSSPTVLNSSG). Residues 512–521 (RMDESVWRPY) are compositionally biased toward basic and acidic residues.

As to quaternary structure, heterodimer of an alpha and a beta subunit. The alpha subunit binds DNA as a monomer and through the Runt domain. DNA-binding is increased by heterodimerization. Interacts with XRCC6 (Ku70) and XRCC5 (Ku80). Interacts with HIVEP3. Interacts with IFI204. Interaction with SATB2; the interaction results in enhanced DNA binding and transactivation by these transcription factors. Binds to HIPK3. Interacts with FOXO1 (via a C-terminal region); the interaction inhibits RUNX2 transcriptional activity towards BGLAP. This interaction is prevented on insulin or IGF1 stimulation as FOXO1 is exported from the nucleus. Interacts with CCNB1, KAT6A and KAT6B. Interacts with FOXP3. Interacts with TMEM119. Interacts with OLFM2. Interacts with IPO7; the interaction inhibits RUNX2 nuclear translocation in osteoblasts. Interacts with DDX5. In terms of processing, phosphorylated; probably by MAP kinases (MAPK). Phosphorylation by HIPK3 is required for the SPEN/MINT and FGF2 transactivation during osteoblastic differentiation. Phosphorylation at Ser-451 by CDK1 promotes endothelial cell proliferation required for tumor angiogenesis probably by facilitating cell cycle progression. Isoform 3 is phosphorylated on Ser-340. Specifically expressed in osteoblasts.

The protein resides in the nucleus. Its subcellular location is the cytoplasm. In terms of biological role, transcription factor involved in osteoblastic differentiation and skeletal morphogenesis. Essential for the maturation of osteoblasts and both intramembranous and endochondral ossification. CBF binds to the core site, 5'-PYGPYGGT-3', of a number of enhancers and promoters, including murine leukemia virus, polyomavirus enhancer, T-cell receptor enhancers, osteocalcin, osteopontin, bone sialoprotein, alpha 1(I) collagen, LCK, IL-3 and GM-CSF promoters. In osteoblasts, supports transcription activation: synergizes with SPEN/MINT to enhance FGFR2-mediated activation of the osteocalcin FGF-responsive element (OCFRE). Inhibits KAT6B-dependent transcriptional activation. The sequence is that of Runt-related transcription factor 2 (RUNX2) from Homo sapiens (Human).